The sequence spans 238 residues: Lactate utilization protein A (238 aa).

This sequence belongs to the LutA/YkgE family.

Functionally, is involved in L-lactate degradation and allows cells to grow with lactate as the sole carbon source. This is Lactate utilization protein A from Bacillus velezensis (strain DSM 23117 / BGSC 10A6 / LMG 26770 / FZB42) (Bacillus amyloliquefaciens subsp. plantarum).